The chain runs to 637 residues: Zinc finger protein rsv2 (637 aa).

Disordered stretches follow at residues 1 to 41, 145 to 164, 169 to 207, 221 to 363, 404 to 427, and 440 to 558; these read MDTT…SKMN, SNHQFITTPPVNGSNEPTSA, IITANSSPSGNAGSNASASMSVPPPLTPSASTINDQPFS, TGAI…STAL, QDSFNKESIKQRIPSLSPPITRSY, and SVNP…GAQR. Residues 172-189 show a composition bias toward low complexity; that stretch reads ANSSPSGNAGSNASASMS. Over residues 196 to 207 the composition is skewed to polar residues; sequence PSASTINDQPFS. A compositionally biased stretch (basic and acidic residues) spans 279–296; the sequence is SDLKRSLGHNQKSDRVSK. Polar residues predominate over residues 298–344; it reads VSPQHQANPSTLNNPLKTQNFDSSKNLYTDNKDSSLVSPTGLQSRME. Basic and acidic residues-rich tracts occupy residues 345–355 and 404–413; these read QNPEVRAHPMK and QDSFNKESIK. Low complexity predominate over residues 455–471; the sequence is VPSNTTISSSPPLTSPV. Polar residues-rich tracts occupy residues 472–498 and 508–527; these read KTSANIPNLLPTSELDSSNAPHSQSAA and YYNTRSSHSVVPNPTNQKVS. Low complexity predominate over residues 544–554; the sequence is TTPTNSSTTAT. The C2H2-type 1 zinc finger occupies 572–603; the sequence is VRCTLQNRVTGEICNTVFSRTYDLIRHQDTIH. The C2H2-type 2; degenerate zinc finger occupies 610–635; the sequence is FRCEICGDQRHFSRHDALVRHLRVKH.

It is found in the nucleus. The polypeptide is Zinc finger protein rsv2 (rsv2) (Schizosaccharomyces pombe (strain 972 / ATCC 24843) (Fission yeast)).